The primary structure comprises 151 residues: UPF0208 membrane protein PC1_2779 (151 aa).

A run of 2 helical transmembrane segments spans residues 46–66 (FGIRIMPPLAVFTLTWQIALG) and 69–89 (LGPAIATALFACSLPLQGLWW).

Belongs to the UPF0208 family.

It localises to the cell inner membrane. This Pectobacterium carotovorum subsp. carotovorum (strain PC1) protein is UPF0208 membrane protein PC1_2779.